Reading from the N-terminus, the 778-residue chain is ATP synthase subunit beta (778 aa).

The interval 1-289 (MKENNKTIEA…IDIYEENEDL (289 aa)) is unknown. The segment at 290-778 (MKLNTLKSDK…KPLNSENKSN (489 aa)) is ATP synthase subunit beta. ATP is bound at residue 447 to 454 (GGAGVGKT).

The protein belongs to the ATPase alpha/beta chains family. As to quaternary structure, F-type ATPases have 2 components, CF(1) - the catalytic core - and CF(0) - the membrane proton channel. CF(1) has five subunits: alpha(3), beta(3), gamma(1), delta(1), epsilon(1). CF(0) has three main subunits: a(1), b(2) and c(9-12). The alpha and beta chains form an alternating ring which encloses part of the gamma chain. CF(1) is attached to CF(0) by a central stalk formed by the gamma and epsilon chains, while a peripheral stalk is formed by the delta and b chains.

The protein localises to the cell membrane. The enzyme catalyses ATP + H2O + 4 H(+)(in) = ADP + phosphate + 5 H(+)(out). Functionally, produces ATP from ADP in the presence of a proton gradient across the membrane. The catalytic sites are hosted primarily by the beta subunits. The sequence is that of ATP synthase subunit beta (atpD) from Malacoplasma penetrans (strain HF-2) (Mycoplasma penetrans).